Here is a 428-residue protein sequence, read N- to C-terminus: Probable oxidoreductase OrdL (428 aa).

The protein is Probable oxidoreductase OrdL (ordL) of Rhizobium meliloti (strain 1021) (Ensifer meliloti).